The primary structure comprises 972 residues: UvrABC system protein A (972 aa).

32 to 39 (GLSGSGKS) provides a ligand contact to ATP. The C4-type; atypical zinc finger occupies 257-285 (CPNGHALAVDDLEPRSFSFNSPYGACPEC). 2 ABC transporter domains span residues 315–601 (WSNG…KDSI) and 621–950 (VDPR…KFLA). 654 to 661 (GVSGSGKS) serves as a coordination point for ATP. Residues 753 to 779 (CEACTGDGTIKIEMNFLPDVYVPCEVC) form a C4-type zinc finger.

The protein belongs to the ABC transporter superfamily. UvrA family. As to quaternary structure, forms a heterotetramer with UvrB during the search for lesions.

The protein localises to the cytoplasm. The UvrABC repair system catalyzes the recognition and processing of DNA lesions. UvrA is an ATPase and a DNA-binding protein. A damage recognition complex composed of 2 UvrA and 2 UvrB subunits scans DNA for abnormalities. When the presence of a lesion has been verified by UvrB, the UvrA molecules dissociate. The sequence is that of UvrABC system protein A from Mycobacterium bovis (strain ATCC BAA-935 / AF2122/97).